The chain runs to 351 residues: Peptide chain release factor 1 (351 aa).

At Q229 the chain carries N5-methylglutamine.

The protein belongs to the prokaryotic/mitochondrial release factor family. In terms of processing, methylated by PrmC. Methylation increases the termination efficiency of RF1.

It is found in the cytoplasm. Its function is as follows. Peptide chain release factor 1 directs the termination of translation in response to the peptide chain termination codons UAG and UAA. The protein is Peptide chain release factor 1 of Cereibacter sphaeroides (strain ATCC 17029 / ATH 2.4.9) (Rhodobacter sphaeroides).